The sequence spans 218 residues: Thiopurine S-methyltransferase (218 aa).

Trp10, Leu45, Glu66, and Arg123 together coordinate S-adenosyl-L-methionine.

The protein belongs to the class I-like SAM-binding methyltransferase superfamily. TPMT family.

Its subcellular location is the cytoplasm. The catalysed reaction is S-adenosyl-L-methionine + a thiopurine = S-adenosyl-L-homocysteine + a thiopurine S-methylether.. The polypeptide is Thiopurine S-methyltransferase (Shewanella sp. (strain ANA-3)).